Here is a 557-residue protein sequence, read N- to C-terminus: Formate--tetrahydrofolate ligase (557 aa).

T65–T72 is a binding site for ATP.

The protein belongs to the formate--tetrahydrofolate ligase family.

It catalyses the reaction (6S)-5,6,7,8-tetrahydrofolate + formate + ATP = (6R)-10-formyltetrahydrofolate + ADP + phosphate. The protein operates within one-carbon metabolism; tetrahydrofolate interconversion. This chain is Formate--tetrahydrofolate ligase, found in Zymomonas mobilis subsp. mobilis (strain ATCC 31821 / ZM4 / CP4).